Here is a 176-residue protein sequence, read N- to C-terminus: Ribose 1,5-bisphosphate phosphokinase PhnN (176 aa).

Glycine 10–aspartate 17 provides a ligand contact to ATP.

The protein belongs to the ribose 1,5-bisphosphokinase family.

It catalyses the reaction alpha-D-ribose 1,5-bisphosphate + ATP = 5-phospho-alpha-D-ribose 1-diphosphate + ADP. The protein operates within metabolic intermediate biosynthesis; 5-phospho-alpha-D-ribose 1-diphosphate biosynthesis; 5-phospho-alpha-D-ribose 1-diphosphate from D-ribose 5-phosphate (route II): step 3/3. Functionally, catalyzes the phosphorylation of ribose 1,5-bisphosphate to 5-phospho-D-ribosyl alpha-1-diphosphate (PRPP). This Methylobacterium radiotolerans (strain ATCC 27329 / DSM 1819 / JCM 2831 / NBRC 15690 / NCIMB 10815 / 0-1) protein is Ribose 1,5-bisphosphate phosphokinase PhnN.